Consider the following 413-residue polypeptide: Replication factor C large subunit (413 aa).

54–61 contacts ATP; the sequence is GPPGSGKT.

Belongs to the activator 1 small subunits family. RfcL subfamily. As to quaternary structure, heteromultimer composed of small subunits (RfcS) and large subunits (RfcL).

Its function is as follows. Part of the RFC clamp loader complex which loads the PCNA sliding clamp onto DNA. The chain is Replication factor C large subunit from Thermofilum pendens (strain DSM 2475 / Hrk 5).